The primary structure comprises 104 residues: SOSS complex subunit C (104 aa).

Residue Ala-2 is modified to N-acetylalanine. Ser-50 carries the phosphoserine modification.

It belongs to the SOSS-C family. Component of the SOSS complex, composed of SOSS-B (SOSS-B1/NABP2 or SOSS-B2/NABP1), SOSS-A/INTS3 and SOSS-C/INIP. SOSS complexes containing SOSS-B1/NABP2 are more abundant than complexes containing SOSS-B2/NABP1. Interacts with INTS3; the interaction is direct.

The protein resides in the nucleus. Functionally, component of the SOSS complex, a multiprotein complex that functions downstream of the MRN complex to promote DNA repair and G2/M checkpoint. The SOSS complex associates with single-stranded DNA at DNA lesions and influences diverse endpoints in the cellular DNA damage response including cell-cycle checkpoint activation, recombinational repair and maintenance of genomic stability. Required for efficient homologous recombination-dependent repair of double-strand breaks (DSBs) and ATM-dependent signaling pathways. The sequence is that of SOSS complex subunit C (Inip) from Mus musculus (Mouse).